We begin with the raw amino-acid sequence, 603 residues long: Aspartate--tRNA(Asp/Asn) ligase (603 aa).

Residue Glu-172 participates in L-aspartate binding. The tract at residues 196–199 (QLFK) is aspartate. L-aspartate is bound at residue Arg-218. Residues 218–220 (RDE) and Gln-227 each bind ATP. L-aspartate is bound at residue His-457. Position 491 (Glu-491) interacts with ATP. Residue Arg-498 coordinates L-aspartate. Position 543-546 (543-546 (GLDR)) interacts with ATP.

It belongs to the class-II aminoacyl-tRNA synthetase family. Type 1 subfamily. Homodimer.

Its subcellular location is the cytoplasm. The catalysed reaction is tRNA(Asx) + L-aspartate + ATP = L-aspartyl-tRNA(Asx) + AMP + diphosphate. Aspartyl-tRNA synthetase with relaxed tRNA specificity since it is able to aspartylate not only its cognate tRNA(Asp) but also tRNA(Asn). Reaction proceeds in two steps: L-aspartate is first activated by ATP to form Asp-AMP and then transferred to the acceptor end of tRNA(Asp/Asn). In Laribacter hongkongensis (strain HLHK9), this protein is Aspartate--tRNA(Asp/Asn) ligase.